Consider the following 774-residue polypeptide: 5-methyltetrahydropteroyltriglutamate--homocysteine methyltransferase (774 aa).

Residues 24-27 and lysine 120 each bind 5-methyltetrahydropteroyltri-L-glutamate; that span reads RELK. Residues 446–448 and glutamate 499 each bind L-homocysteine; that span reads IGS. Residues 446–448 and glutamate 499 contribute to the L-methionine site; that span reads IGS. Tryptophan 576 is a 5-methyltetrahydropteroyltri-L-glutamate binding site. An L-homocysteine-binding site is contributed by aspartate 614. Aspartate 614 is a binding site for L-methionine. 5-methyltetrahydropteroyltri-L-glutamate is bound at residue glutamate 620. Histidine 656, cysteine 658, and glutamate 680 together coordinate Zn(2+). Residue histidine 709 is the Proton donor of the active site. Cysteine 741 is a Zn(2+) binding site.

This sequence belongs to the vitamin-B12 independent methionine synthase family. Zn(2+) serves as cofactor.

The enzyme catalyses 5-methyltetrahydropteroyltri-L-glutamate + L-homocysteine = tetrahydropteroyltri-L-glutamate + L-methionine. Its pathway is amino-acid biosynthesis; L-methionine biosynthesis via de novo pathway; L-methionine from L-homocysteine (MetE route): step 1/1. In terms of biological role, catalyzes the transfer of a methyl group from 5-methyltetrahydrofolate to homocysteine resulting in methionine formation. This Streptomyces griseus subsp. griseus (strain JCM 4626 / CBS 651.72 / NBRC 13350 / KCC S-0626 / ISP 5235) protein is 5-methyltetrahydropteroyltriglutamate--homocysteine methyltransferase.